The primary structure comprises 202 residues: NADH-quinone oxidoreductase subunit C (202 aa).

The protein belongs to the complex I 30 kDa subunit family. In terms of assembly, NDH-1 is composed of 14 different subunits. Subunits NuoB, C, D, E, F, and G constitute the peripheral sector of the complex.

It is found in the cell inner membrane. The catalysed reaction is a quinone + NADH + 5 H(+)(in) = a quinol + NAD(+) + 4 H(+)(out). In terms of biological role, NDH-1 shuttles electrons from NADH, via FMN and iron-sulfur (Fe-S) centers, to quinones in the respiratory chain. The immediate electron acceptor for the enzyme in this species is believed to be ubiquinone. Couples the redox reaction to proton translocation (for every two electrons transferred, four hydrogen ions are translocated across the cytoplasmic membrane), and thus conserves the redox energy in a proton gradient. In Bartonella quintana (strain Toulouse) (Rochalimaea quintana), this protein is NADH-quinone oxidoreductase subunit C.